A 115-amino-acid chain; its full sequence is Waprin-like protein (115 aa).

The N-terminal stretch at M1 to S21 is a signal peptide. The region spanning L23–S69 is the WAP domain. 4 cysteine pairs are disulfide-bonded: C30-C56, C39-C60, C43-C55, and C49-C65.

Belongs to the venom waprin family. Cys-rich waprin subfamily. As to expression, expressed by the venom gland.

The protein resides in the secreted. Functionally, antimicrobial peptides with activity against Gram-positive and Gram-negative bacteria as well as fungi. Recognizes carbohydrates in the microbial cell walls, and induces structural damage to them. Also inhibits microbial serine proteases, as well as mammalian elastases. Carbohydrates that are recognized are LPS, mannan, peptidoglycan, and N-acetl-D-glucosamine. This is Waprin-like protein from Tetramorium bicarinatum (Tramp ant).